Here is a 384-residue protein sequence, read N- to C-terminus: UDP-N-acetylglucosamine--N-acetylmuramyl-(pentapeptide) pyrophosphoryl-undecaprenol N-acetylglucosamine transferase (384 aa).

UDP-N-acetyl-alpha-D-glucosamine is bound by residues 22–24 (TGG), Arg179, Ser209, and Gln312.

The protein belongs to the glycosyltransferase 28 family. MurG subfamily.

It is found in the cell inner membrane. It catalyses the reaction di-trans,octa-cis-undecaprenyl diphospho-N-acetyl-alpha-D-muramoyl-L-alanyl-D-glutamyl-meso-2,6-diaminopimeloyl-D-alanyl-D-alanine + UDP-N-acetyl-alpha-D-glucosamine = di-trans,octa-cis-undecaprenyl diphospho-[N-acetyl-alpha-D-glucosaminyl-(1-&gt;4)]-N-acetyl-alpha-D-muramoyl-L-alanyl-D-glutamyl-meso-2,6-diaminopimeloyl-D-alanyl-D-alanine + UDP + H(+). It participates in cell wall biogenesis; peptidoglycan biosynthesis. Functionally, cell wall formation. Catalyzes the transfer of a GlcNAc subunit on undecaprenyl-pyrophosphoryl-MurNAc-pentapeptide (lipid intermediate I) to form undecaprenyl-pyrophosphoryl-MurNAc-(pentapeptide)GlcNAc (lipid intermediate II). In Treponema pallidum (strain Nichols), this protein is UDP-N-acetylglucosamine--N-acetylmuramyl-(pentapeptide) pyrophosphoryl-undecaprenol N-acetylglucosamine transferase.